A 237-amino-acid polypeptide reads, in one-letter code: 2,3-bisphosphoglycerate-dependent phosphoglycerate mutase (237 aa).

Substrate is bound by residues 8-15 (RHGQSQWN), 21-22 (TG), R60, 87-90 (ERHY), K98, 114-115 (RR), and 180-181 (GN). The Tele-phosphohistidine intermediate role is filled by H9. The Proton donor/acceptor role is filled by E87.

It belongs to the phosphoglycerate mutase family. BPG-dependent PGAM subfamily. In terms of assembly, homodimer.

It carries out the reaction (2R)-2-phosphoglycerate = (2R)-3-phosphoglycerate. It participates in carbohydrate degradation; glycolysis; pyruvate from D-glyceraldehyde 3-phosphate: step 3/5. Functionally, catalyzes the interconversion of 2-phosphoglycerate and 3-phosphoglycerate. The sequence is that of 2,3-bisphosphoglycerate-dependent phosphoglycerate mutase from Caulobacter vibrioides (strain ATCC 19089 / CIP 103742 / CB 15) (Caulobacter crescentus).